The primary structure comprises 388 residues: Chorismate synthase (388 aa).

Residues R39 and R45 each coordinate NADP(+). A disordered region spans residues E95 to K118. FMN-binding positions include R130–S132, N251–A252, G296, K311–T315, and R337.

Belongs to the chorismate synthase family. Homotetramer. It depends on FMNH2 as a cofactor.

It carries out the reaction 5-O-(1-carboxyvinyl)-3-phosphoshikimate = chorismate + phosphate. The protein operates within metabolic intermediate biosynthesis; chorismate biosynthesis; chorismate from D-erythrose 4-phosphate and phosphoenolpyruvate: step 7/7. Its function is as follows. Catalyzes the anti-1,4-elimination of the C-3 phosphate and the C-6 proR hydrogen from 5-enolpyruvylshikimate-3-phosphate (EPSP) to yield chorismate, which is the branch point compound that serves as the starting substrate for the three terminal pathways of aromatic amino acid biosynthesis. This reaction introduces a second double bond into the aromatic ring system. The sequence is that of Chorismate synthase from Listeria monocytogenes serovar 1/2a (strain ATCC BAA-679 / EGD-e).